Here is a 272-residue protein sequence, read N- to C-terminus: Sulfate transporter CysZ (272 aa).

4 helical membrane-spanning segments follow: residues phenylalanine 29–isoleucine 49, tryptophan 66–phenylalanine 86, isoleucine 148–leucine 168, and phenylalanine 219–tryptophan 239.

This sequence belongs to the CysZ family.

The protein localises to the cell inner membrane. Its function is as follows. High affinity, high specificity proton-dependent sulfate transporter, which mediates sulfate uptake. Provides the sulfur source for the cysteine synthesis pathway. The sequence is that of Sulfate transporter CysZ from Haemophilus influenzae (strain PittGG).